An 864-amino-acid polypeptide reads, in one-letter code: Receptor like protein 24 (864 aa).

An N-terminal signal peptide occupies residues 1–29; sequence MKTVFKSLLLLHFLLLLLLCFVSPSSFFL. Topologically, residues 30 to 830 are extracellular; the sequence is LKVPVGGLVA…EEKGEVINWK (801 aa). N61, N73, N94, and N112 each carry an N-linked (GlcNAc...) asparagine glycan. LRR repeat units lie at residues 100 to 125, 127 to 148, 156 to 182, 183 to 205, 207 to 229, 230 to 253, 254 to 277, 279 to 303, 305 to 326, 327 to 350, 351 to 376, 378 to 398, 399 to 423, 425 to 448, and 449 to 472; these read FHQLRYLALNRNNFTSASLPSEFCNL, KLKLLSLFSNGFIDLSHNDLMG, LGKLAVLDLSDNHFSGTLNPNNSLFEL, HSLRYLNLAFNNISSSLPSKFGN, NKLEVLSLSFNGFSGQCFPTISN, LTRITQLYLHNNELTGSFPLVQNL, TKLSFLGLSDNLFSGTIPSYLFTF, SLSTLDLRENDLSGSIEVPNSSTSS, LEIMYLGFNHLEGKILEPISKL, INLKRLDLSFLNTSYPIDLNLLSP, LKSLSYLDFSGNSLSPASLSSSSYIP, SMESIVLSLCGIREFPNILKH, LQNLIHIDITSNQIKGKIPEWLWTL, QLSFVDISNNSFNGFQGSAEVFVN, and LSVRILMLDANNFEGALPTLPLSI. N-linked (GlcNAc...) asparagine glycans are attached at residues N176, N194, N229, and N252. A glycan (N-linked (GlcNAc...) asparagine) is linked at N298. A glycan (N-linked (GlcNAc...) asparagine) is linked at N338. 2 N-linked (GlcNAc...) asparagine glycosylation sites follow: N433 and N448. The LRR 16; degenerate repeat unit spans residues 473 to 492; it reads IGFSAIHNSFTGEIPLSICN. N492 and N505 each carry an N-linked (GlcNAc...) asparagine glycan. LRR repeat units follow at residues 493–514, 515–538, 539–562, 564–585, 586–610, 613–637, 688–712, 713–735, 736–760, and 762–785; these read RTSLTMVDLSYNNFTGPIPQCL, SNFMFVNLRKNDLEGSIPDTFYTD, SSLKSLDVGYNRLTGKLPRSLLNC, SLRFLSVDNNRVKDTFPFWLKA, LPNLRVLTLRSNKFYGPISPPHQGP, FPELRIFEIADNMFTGSLPPSFFVN, LTSYAAIDFSGNRLQGQIPESIGLL, KALIALNLSNNAFTGHIPLSFAN, LMNLESLDMSGNQLSGTIPNGLGSL, and FLVYISVAHNKLKGEIPQGTQITG. An N-linked (GlcNAc...) asparagine glycan is attached at N561. N-linked (GlcNAc...) asparagine glycosylation is present at N719. The helical transmembrane segment at 831 to 851 threads the bilayer; it reads AVAIGYAPGLLFGLAIAHLIA. Residues 852–864 are Cytoplasmic-facing; that stretch reads SYKPEWLVKIIGF.

Belongs to the RLP family.

Its subcellular location is the cell membrane. This is Receptor like protein 24 from Arabidopsis thaliana (Mouse-ear cress).